The following is a 908-amino-acid chain: UPF0182 protein NT01CX_0852 (908 aa).

The next 7 helical transmembrane spans lie at 8-28 (IGLF…VNVI), 47-67 (FTSV…AIKT), 96-116 (IINA…SLGY), 157-177 (LLSL…FLNI), 209-229 (LAIL…IKAW), 253-273 (FYIA…FSIL), and 280-300 (IISC…VSGA).

Belongs to the UPF0182 family.

It localises to the cell membrane. The protein is UPF0182 protein NT01CX_0852 of Clostridium novyi (strain NT).